A 289-amino-acid polypeptide reads, in one-letter code: 7-methylguanosine phosphate-specific 5'-nucleotidase (289 aa).

Catalysis depends on Asp38, which acts as the Nucleophile. The Mg(2+) site is built by Asp38 and Asp40. Catalysis depends on Asp40, which acts as the Proton donor. Residue Glu85 coordinates CMP. Glu85 serves as a coordination point for N(7)-methyl-GMP. Substrate is bound by residues 153–154 (SA) and Lys202. Asp227 contacts Mg(2+).

Belongs to the pyrimidine 5'-nucleotidase family. In terms of assembly, monomer.

It localises to the cytoplasm. The enzyme catalyses N(7)-methyl-GMP + H2O = N(7)-methylguanosine + phosphate. It carries out the reaction CMP + H2O = cytidine + phosphate. It catalyses the reaction a ribonucleoside 5'-phosphate + H2O = a ribonucleoside + phosphate. Its function is as follows. Specifically hydrolyzes 7-methylguanosine monophosphate (m(7)GMP) to 7-methylguanosine and inorganic phosphate. The specific activity for m(7)GMP may protect cells against undesired salvage of m(7)GMP and its incorporation into nucleic acids. Also has weak activity for CMP. UMP and purine nucleotides are poor substrates. This is 7-methylguanosine phosphate-specific 5'-nucleotidase (NT5C3B) from Gallus gallus (Chicken).